A 75-amino-acid polypeptide reads, in one-letter code: Protein BsdD (75 aa).

Its function is as follows. Involved in the non-oxidative decarboxylation and detoxification of phenolic derivatives under both aerobic and anaerobic conditions, however the precise biochemical function of BsdD in metabolism of phenolic acid is unknown. The polypeptide is Protein BsdD (Bacillus subtilis (strain 168)).